The chain runs to 324 residues: Probable nicotianamine synthase 4 (324 aa).

It belongs to the nicotianamine synthase (NAS)-like family.

The enzyme catalyses 3 S-adenosyl-L-methionine = nicotianamine + 3 S-methyl-5'-thioadenosine + 3 H(+). Its function is as follows. Synthesizes nicotianamine, a polyamine which serves as a sensor for the physiological iron status within the plant, and/or might be involved in the transport of iron. This chain is Probable nicotianamine synthase 4 (NAS4), found in Arabidopsis thaliana (Mouse-ear cress).